A 339-amino-acid polypeptide reads, in one-letter code: MRSSWDIRVTDTSLRDGSHHKRHQFTGEEVRAIVGALDHAGVPVIEVTHGDGLGGSSFNYGFSKVPEQELISIAVDTAKNAKIAFLMLPGLGIKDDIIVAQDNGASICRIATHCTEADVSIQHFGLARDRGLETVGFLMMAHSIAPEKLAKQARIMADAGCQCVYVVDSAGALVLEQVSDRVEALVQELGSDAQVGFHGHENLGLGVANSIAAVRAGAKQIDGSTRRFGAGAGNAPVEAFVGVCDKIGVKTGIDFFAIADAAEDVVRPAMPAECLLDRQALMMGYAGVYSSFLKHAERQAERYGVSSAELLVRAGKRKLVGGQEDQLIDIALELQRERL.

In terms of domain architecture, Pyruvate carboxyltransferase spans 7-259 (IRVTDTSLRD…KTGIDFFAIA (253 aa)). Substrate is bound at residue 15-16 (RD). Asp-16 serves as a coordination point for Mn(2+). His-19 functions as the Proton acceptor in the catalytic mechanism. The substrate site is built by Ser-169 and His-198. Mn(2+) contacts are provided by His-198 and His-200. Residue Tyr-289 coordinates substrate.

This sequence belongs to the 4-hydroxy-2-oxovalerate aldolase family.

The enzyme catalyses (S)-4-hydroxy-2-oxopentanoate = acetaldehyde + pyruvate. The protein is 4-hydroxy-2-oxovalerate aldolase 3 (hsaF) of Rhodococcus jostii (strain RHA1).